The primary structure comprises 743 residues: 1,4-alpha-glucan branching enzyme GlgB (743 aa).

Asp416 acts as the Nucleophile in catalysis. Glu469 (proton donor) is an active-site residue.

The protein belongs to the glycosyl hydrolase 13 family. GlgB subfamily. In terms of assembly, monomer.

The enzyme catalyses Transfers a segment of a (1-&gt;4)-alpha-D-glucan chain to a primary hydroxy group in a similar glucan chain.. The protein operates within glycan biosynthesis; glycogen biosynthesis. Its function is as follows. Catalyzes the formation of the alpha-1,6-glucosidic linkages in glycogen by scission of a 1,4-alpha-linked oligosaccharide from growing alpha-1,4-glucan chains and the subsequent attachment of the oligosaccharide to the alpha-1,6 position. The protein is 1,4-alpha-glucan branching enzyme GlgB of Shewanella baltica (strain OS185).